We begin with the raw amino-acid sequence, 534 residues long: Probable alpha-galactosidase A (534 aa).

Residues Met-1–Ser-25 form the signal peptide. An intrachain disulfide couples Cys-47 to Cys-79. N-linked (GlcNAc...) asparagine glycans are attached at residues Asn-50, Asn-88, Asn-94, and Asn-124. The cysteines at positions 127 and 157 are disulfide-linked. Asp-155 (nucleophile) is an active-site residue. Asn-204 carries an N-linked (GlcNAc...) asparagine glycan. Asp-213 functions as the Proton donor in the catalytic mechanism. The Ricin B-type lectin domain occupies Cys-413–Leu-534. Cys-430 and Cys-443 are disulfide-bonded. Asn-444 is a glycosylation site (N-linked (GlcNAc...) asparagine). An intrachain disulfide couples Cys-468 to Cys-481.

Belongs to the glycosyl hydrolase 27 family.

Its subcellular location is the secreted. The enzyme catalyses Hydrolysis of terminal, non-reducing alpha-D-galactose residues in alpha-D-galactosides, including galactose oligosaccharides, galactomannans and galactolipids.. In terms of biological role, hydrolyzes a variety of simple alpha-D-galactoside as well as more complex molecules such as oligosaccharides and polysaccharides. This chain is Probable alpha-galactosidase A (aglA), found in Aspergillus flavus (strain ATCC 200026 / FGSC A1120 / IAM 13836 / NRRL 3357 / JCM 12722 / SRRC 167).